We begin with the raw amino-acid sequence, 1017 residues long: Ubiquitin-like modifier-activating enzyme 1 (1017 aa).

2 consecutive repeat copies span residues 26-163 (SHET…GQLF) and 419-571 (GKTL…QVVV). The interval 26 to 571 (SHETMKKITS…GTKGNTQVVV (546 aa)) is 2 approximate repeats. Residues A438, D464, R475, K488, and 536–537 (DN) each bind ATP. The Glycyl thioester intermediate role is filled by C592. Residues 765–781 (IQTSENEPAPSSNTQQA) show a composition bias toward polar residues. The interval 765–788 (IQTSENEPAPSSNTQQAGGDAEDD) is disordered.

Belongs to the ubiquitin-activating E1 family. As to quaternary structure, monomer.

It carries out the reaction ATP + ubiquitin + [E1 ubiquitin-activating enzyme]-L-cysteine = AMP + diphosphate + S-ubiquitinyl-[E1 ubiquitin-activating enzyme]-L-cysteine.. It participates in protein modification; protein ubiquitination. Functionally, catalyzes the first step in ubiquitin conjugation to mark cellular proteins for degradation through the ubiquitin-proteasome system. Activates ubiquitin by first adenylating its C-terminal glycine residue with ATP, and thereafter linking this residue to the side chain of a cysteine residue in E1, yielding a ubiquitin-E1 thioester and free AMP. The chain is Ubiquitin-like modifier-activating enzyme 1 (uba1) from Dictyostelium discoideum (Social amoeba).